The primary structure comprises 189 residues: Ras-like protein 1 (189 aa).

10–17 provides a ligand contact to GTP; the sequence is GGGGVGKS. Residues 32-40 carry the Effector region motif; it reads YDPTIEDSY. Residues 57–61 and 116–119 contribute to the GTP site; these read DTAGQ and NKCD. A Cysteine methyl ester modification is found at Cys186. Cys186 is lipidated: S-geranylgeranyl cysteine. The propeptide at 187–189 is removed in mature form; sequence LLL.

It belongs to the small GTPase superfamily. Ras family.

It localises to the cell membrane. It catalyses the reaction GTP + H2O = GDP + phosphate + H(+). Functionally, ras proteins bind GDP/GTP and possess intrinsic GTPase activity. The protein is Ras-like protein 1 (RAS1) of Physarum polycephalum (Slime mold).